Consider the following 815-residue polypeptide: MRVPLSWLQDLVQLNETVEILAEGLSMAGFEVEAIDDLASHAQGVVVGLVKDHQPHPNADKLSVCQVDVGSGEGLQIVCGAPNVRIGIHVPVAMVGATLPAVGIKIKASELRGVPSQGMICSLAELGLESNGNGIAILEEIAENVPDLGQPVGPLLGLDDTVLELAITANRPDGMSMVGIAREVAALTGASLQLPQLDMAPIHKSFEPDSTSSASMLKGGLYGLTALENVDGELTSPAWLKQRLERSGCKSVNGVVDITNLVMLEQGQPLHAFDIDALEMITGQTVSAESFGLRQARNNELFNGLDGHQLQLNENCQIVTCHDIPIALAGVMGSAESGVSAKTRRVWLESAMFTPTAVRTTCRAVGLRTDASSRFEKGLPVEMTLASARRAVTLMEEHLGIKSNGCWVYGESPKSAEPVKLRREAIHRLLGPIGVENDNRYLEDDIIETSLLALGCELSPYNEGWLVIVPPSRRRDLSREVDLIEEVSRLVGFDRFEANLPDPLEPGGLTTAQTAERLLRQMLCGAGLQEVTTLSLVGADSDEPQRIAISNPLLAETSHLRTNLWEEHLRICQRNLQSSQPGCWLYEIGNVYTVTDELINQRAVLGGVICAERSFERWSTSGKIKSMTYHQARGQLSQVFQGLKLDINDRPLKDNHSLHPGRSAELFVEGKLLGDFGQLHPALSERLDLPEATYLFALDLQCIIQAATRSNRWNPTFRPFPTVPAMELDLAVIVSKECSCSDLIQAIRKAGKPLLEHVELIDRFEGGQLDPYSCSQAFRLRYRSKDRTLSEDKVNPIHEKVRQALVKQFSAELRS.

The region spanning 39–153 is the tRNA-binding domain; sequence ASHAQGVVVG…NVPDLGQPVG (115 aa). Residues 414–498 form the B5 domain; it reads KSAEPVKLRR…RLVGFDRFEA (85 aa). The Mg(2+) site is built by Asp-476, Asp-482, Glu-485, and Glu-486. In terms of domain architecture, FDX-ACB spans 721-814; sequence PTVPAMELDL…LVKQFSAELR (94 aa).

It belongs to the phenylalanyl-tRNA synthetase beta subunit family. Type 1 subfamily. Tetramer of two alpha and two beta subunits. Mg(2+) is required as a cofactor.

Its subcellular location is the cytoplasm. It carries out the reaction tRNA(Phe) + L-phenylalanine + ATP = L-phenylalanyl-tRNA(Phe) + AMP + diphosphate + H(+). The chain is Phenylalanine--tRNA ligase beta subunit from Prochlorococcus marinus (strain MIT 9313).